The chain runs to 74 residues: Kappa-scoloptoxin(07)-Ssm2c (74 aa).

A signal peptide spans 1–19; sequence MLVFYAPLFVSIFSNTVMG. A propeptide spanning residues 20–41 is cleaved from the precursor; sequence ATIDKPIPKPILREAIEKIAVN.

The protein belongs to the scoloptoxin-07 family. Post-translationally, contains 3 disulfide bonds. In terms of tissue distribution, expressed by the venom gland.

The protein resides in the secreted. Functionally, inhibits voltage-gated potassium channels. The protein is Kappa-scoloptoxin(07)-Ssm2c of Scolopendra mutilans (Chinese red-headed centipede).